Here is a 308-residue protein sequence, read N- to C-terminus: Protoheme IX farnesyltransferase (308 aa).

A run of 9 helical transmembrane segments spans residues 20–40 (VLAY…VTAI), 53–73 (PLLI…ANTF), 102–122 (NALV…WWTT), 124–144 (LLSG…YTLL), 149–169 (TSQN…IGWS), 170–190 (AITD…FFWT), 227–249 (LIYT…WLYM), 254–276 (VAGA…GEPV), and 288–308 (YLAV…PTLF).

The protein belongs to the UbiA prenyltransferase family. Protoheme IX farnesyltransferase subfamily.

It is found in the cell membrane. It carries out the reaction heme b + (2E,6E)-farnesyl diphosphate + H2O = Fe(II)-heme o + diphosphate. Its pathway is porphyrin-containing compound metabolism; heme O biosynthesis; heme O from protoheme: step 1/1. Functionally, converts heme B (protoheme IX) to heme O by substitution of the vinyl group on carbon 2 of heme B porphyrin ring with a hydroxyethyl farnesyl side group. The sequence is that of Protoheme IX farnesyltransferase from Mycobacterium leprae (strain TN).